We begin with the raw amino-acid sequence, 510 residues long: Catalase (510 aa).

Residues 1-26 (MPLLNWSRHMVCLTAAGLITVPTVYA) form the signal peptide. Active-site residues include His-78 and Asn-150. A heme-binding site is contributed by Tyr-358. Positions 386 to 400 (NQDGALNTGHTTSGV) are enriched in polar residues. The tract at residues 386-412 (NQDGALNTGHTTSGVNYEPSRLEPRPA) is disordered.

This sequence belongs to the catalase family. Requires heme as cofactor.

It is found in the periplasm. The enzyme catalyses 2 H2O2 = O2 + 2 H2O. Its function is as follows. Decomposes hydrogen peroxide into water and oxygen; serves to protect cells from the toxic effects of hydrogen peroxide. The sequence is that of Catalase (katB) from Pseudomonas syringae pv. syringae.